The primary structure comprises 507 residues: ATP synthase subunit alpha (507 aa).

A disordered region spans residues 118 to 141 (VDGLGPIETTETRPIESPAPGVMD). 172–179 (GDRQTGKT) is an ATP binding site.

It belongs to the ATPase alpha/beta chains family. As to quaternary structure, F-type ATPases have 2 components, CF(1) - the catalytic core - and CF(0) - the membrane proton channel. CF(1) has five subunits: alpha(3), beta(3), gamma(1), delta(1), epsilon(1). CF(0) has three main subunits: a(1), b(2) and c(9-12). The alpha and beta chains form an alternating ring which encloses part of the gamma chain. CF(1) is attached to CF(0) by a central stalk formed by the gamma and epsilon chains, while a peripheral stalk is formed by the delta and b chains.

It localises to the cell membrane. The catalysed reaction is ATP + H2O + 4 H(+)(in) = ADP + phosphate + 5 H(+)(out). Produces ATP from ADP in the presence of a proton gradient across the membrane. The alpha chain is a regulatory subunit. The chain is ATP synthase subunit alpha from Anoxybacillus flavithermus (strain DSM 21510 / WK1).